A 337-amino-acid chain; its full sequence is Equatorin (337 aa).

Positions 1 to 20 (MDFILLIILSGVFLPDIISL) are cleaved as a signal peptide. Residues 21 to 183 (QPIVGQEPGV…LSELEEIKLK (163 aa)) are Lumenal-facing. The interval 110–130 (SKPTASGEEEKPSESSRKTST) is disordered. The span at 117–126 (EEEKPSESSR) shows a compositional bias: basic and acidic residues. The N-linked (GlcNAc...) asparagine glycan is linked to Asn145. A helical membrane pass occupies residues 184–204 (LMLGISLMTLVLLIPLLIFCF). Over 205-337 (ATLYKLRHLR…LLNKEGSPSN (133 aa)) the chain is Cytoplasmic. The segment at 259 to 283 (SSEMRRSRTRRSKSKPMDFSAGSNQ) is disordered. Residue Ser336 is modified to Phosphoserine.

As to quaternary structure, interacts with SNAP25. Highly N- and O-glycosylated; contains sialic acid. MN9 epitope is O-glycosylated. In terms of tissue distribution, sperm specific, including germ cells (at protein level).

It localises to the cytoplasmic vesicle. It is found in the secretory vesicle. The protein resides in the acrosome membrane. The protein localises to the acrosome inner membrane. Its subcellular location is the acrosome outer membrane. It localises to the nucleus. It is found in the cytoplasm. In terms of biological role, acrosomal membrane-anchored protein involved in the process of fertilization and in acrosome biogenesis. In Mus musculus (Mouse), this protein is Equatorin (Eqtn).